The following is a 194-amino-acid chain: Putative manganese efflux pump MntP (194 aa).

6 helical membrane passes run 2 to 22 (ISII…AFAV), 43 to 63 (LWFG…ASTF), 67 to 87 (VTQF…GNMV), 111 to 131 (PLAV…AFMF), 137 to 157 (AFAI…GLHI), and 174 to 194 (GVVL…VIAF).

The protein belongs to the MntP (TC 9.B.29) family.

The protein localises to the cell membrane. In terms of biological role, probably functions as a manganese efflux pump. In Bifidobacterium longum (strain DJO10A), this protein is Putative manganese efflux pump MntP.